The primary structure comprises 429 residues: Inositol-3-phosphate synthase 1 (429 aa).

A helical membrane pass occupies residues 12 to 32 (LGVLVVGVGGAVATTMIVGTL). NAD(+) contacts are provided by Ala22, Val23, Asp79, Ala116, Ala165, Thr167, Tyr201, Ser244, Arg276, Asp277, and Lys290.

This sequence belongs to the myo-inositol 1-phosphate synthase family. In terms of assembly, homotetramer. NAD(+) is required as a cofactor.

The protein resides in the membrane. The enzyme catalyses D-glucose 6-phosphate = 1D-myo-inositol 3-phosphate. It functions in the pathway polyol metabolism; myo-inositol biosynthesis; myo-inositol from D-glucose 6-phosphate: step 1/2. Its function is as follows. Key enzyme in myo-inositol biosynthesis pathway that catalyzes the conversion of glucose 6-phosphate to 1D-myo-inositol 3-phosphate in a NAD-dependent manner. The polypeptide is Inositol-3-phosphate synthase 1 (Bacteroides thetaiotaomicron (strain ATCC 29148 / DSM 2079 / JCM 5827 / CCUG 10774 / NCTC 10582 / VPI-5482 / E50)).